Consider the following 28-residue polypeptide: Cyclotide ltri-A (28 aa).

The segment at residues 1–28 (GVACGESCVYLPCFTVGCTCTSSQCFKN) is a cross-link (cyclopeptide (Gly-Asn)). 3 disulfide bridges follow: C4-C18, C8-C20, and C13-C25.

Belongs to the cyclotide family. Bracelet subfamily. Post-translationally, this is a cyclic peptide.

Its function is as follows. Probably participates in a plant defense mechanism. The chain is Cyclotide ltri-A from Leonia triandra.